A 232-amino-acid polypeptide reads, in one-letter code: Ribose-5-phosphate isomerase A (232 aa).

Substrate-binding positions include 28 to 31, 83 to 86, and 96 to 99; these read TGST, DGAD, and KGGG. Glu-105 (proton acceptor) is an active-site residue. Lys-123 contacts substrate.

It belongs to the ribose 5-phosphate isomerase family. In terms of assembly, homodimer.

The enzyme catalyses aldehydo-D-ribose 5-phosphate = D-ribulose 5-phosphate. It participates in carbohydrate degradation; pentose phosphate pathway; D-ribose 5-phosphate from D-ribulose 5-phosphate (non-oxidative stage): step 1/1. In terms of biological role, catalyzes the reversible conversion of ribose-5-phosphate to ribulose 5-phosphate. This chain is Ribose-5-phosphate isomerase A, found in Rhodopseudomonas palustris (strain HaA2).